The sequence spans 80 residues: Serine protease inhibitor Kazal-type 1 (80 aa).

The first 23 residues, 1–23 (MKVAVIFLLSALALLSLAGNTFS), serve as a signal peptide directing secretion. Residues 27–80 (TGKEASCHDAVAGCPRIYDPVCGTDGITYANECVLCFENRKRIEPVLIRKGGPC) form the Kazal-like domain. Intrachain disulfides connect cysteine 33–cysteine 62, cysteine 40–cysteine 59, and cysteine 48–cysteine 80.

As to expression, in the genital tract, expressed only in male accessory glands including seminal vesicle, coagulating gland and prostate.

It is found in the secreted. Functionally, serine protease inhibitor which exhibits anti-trypsin activity. In the pancreas, protects against trypsin-catalyzed premature activation of zymogens. In terms of biological role, in the male reproductive tract, binds to sperm heads where it modulates sperm capacitance by inhibiting calcium uptake and nitrogen oxide (NO) production. The chain is Serine protease inhibitor Kazal-type 1 from Mus musculus (Mouse).